Reading from the N-terminus, the 1078-residue chain is Isoleucine--tRNA ligase (1078 aa).

Positions 52-62 (PTANGKPALHH) match the 'HIGH' region motif. The 'KMSKS' region signature appears at 637–641 (KMSKS). Lys640 provides a ligand contact to ATP.

The protein belongs to the class-I aminoacyl-tRNA synthetase family. IleS type 2 subfamily. As to quaternary structure, monomer. The cofactor is Zn(2+).

The protein resides in the cytoplasm. The enzyme catalyses tRNA(Ile) + L-isoleucine + ATP = L-isoleucyl-tRNA(Ile) + AMP + diphosphate. Catalyzes the attachment of isoleucine to tRNA(Ile). As IleRS can inadvertently accommodate and process structurally similar amino acids such as valine, to avoid such errors it has two additional distinct tRNA(Ile)-dependent editing activities. One activity is designated as 'pretransfer' editing and involves the hydrolysis of activated Val-AMP. The other activity is designated 'posttransfer' editing and involves deacylation of mischarged Val-tRNA(Ile). This is Isoleucine--tRNA ligase from Deinococcus radiodurans (strain ATCC 13939 / DSM 20539 / JCM 16871 / CCUG 27074 / LMG 4051 / NBRC 15346 / NCIMB 9279 / VKM B-1422 / R1).